Here is a 67-residue protein sequence, read N- to C-terminus: Large ribosomal subunit protein bL35 (67 aa).

The disordered stretch occupies residues 1 to 41; sequence MPKMKTHRGAAKRFKKTGTGKLKRSHAYTSHMFRHKSQKQK.

The protein belongs to the bacterial ribosomal protein bL35 family.

The sequence is that of Large ribosomal subunit protein bL35 from Shouchella clausii (strain KSM-K16) (Alkalihalobacillus clausii).